An 876-amino-acid polypeptide reads, in one-letter code: Alanine--tRNA ligase (876 aa).

At Lys-74 the chain carries N6-acetyllysine. His-564, His-568, Cys-666, and His-670 together coordinate Zn(2+).

This sequence belongs to the class-II aminoacyl-tRNA synthetase family. As to quaternary structure, homotetramer. Zn(2+) serves as cofactor.

It is found in the cytoplasm. The catalysed reaction is tRNA(Ala) + L-alanine + ATP = L-alanyl-tRNA(Ala) + AMP + diphosphate. Catalyzes the attachment of alanine to tRNA(Ala) in a two-step reaction: alanine is first activated by ATP to form Ala-AMP and then transferred to the acceptor end of tRNA(Ala). Also edits incorrectly charged Ser-tRNA(Ala) and Gly-tRNA(Ala) via its editing domain. In Shigella boydii serotype 4 (strain Sb227), this protein is Alanine--tRNA ligase.